Consider the following 80-residue polypeptide: DNA-binding protein HU-like (80 aa).

It belongs to the bacterial histone-like protein family.

Functionally, histone-like DNA-binding protein which is capable of wrapping DNA to stabilize it, and thus to prevent its denaturation under extreme environmental conditions. In Rickettsia prowazekii (strain Madrid E), this protein is DNA-binding protein HU-like.